A 457-amino-acid chain; its full sequence is Bifunctional protein GlmU (457 aa).

Residues 1–229 (MSNSAKSVVI…LSEMEGVNNR (229 aa)) are pyrophosphorylase. Residues 11–14 (LAAG), Lys-25, Gln-76, 81–82 (GT), 103–105 (YGD), Gly-140, Glu-154, Asn-169, and Asn-227 each bind UDP-N-acetyl-alpha-D-glucosamine. Asp-105 is a binding site for Mg(2+). A Mg(2+)-binding site is contributed by Asn-227. Positions 230-250 (LQLSALERIYQSEQAEQLLLA) are linker. The tract at residues 251 to 457 (GVMLLDPARF…GWKRPVKEKK (207 aa)) is N-acetyltransferase. 2 residues coordinate UDP-N-acetyl-alpha-D-glucosamine: Arg-333 and Lys-351. Catalysis depends on His-363, which acts as the Proton acceptor. UDP-N-acetyl-alpha-D-glucosamine is bound by residues Tyr-366 and Asn-377. Acetyl-CoA contacts are provided by residues Ala-380, 386–387 (NY), Ser-405, Ala-423, and Arg-440.

It in the N-terminal section; belongs to the N-acetylglucosamine-1-phosphate uridyltransferase family. The protein in the C-terminal section; belongs to the transferase hexapeptide repeat family. Homotrimer. It depends on Mg(2+) as a cofactor.

It is found in the cytoplasm. It catalyses the reaction alpha-D-glucosamine 1-phosphate + acetyl-CoA = N-acetyl-alpha-D-glucosamine 1-phosphate + CoA + H(+). It carries out the reaction N-acetyl-alpha-D-glucosamine 1-phosphate + UTP + H(+) = UDP-N-acetyl-alpha-D-glucosamine + diphosphate. It participates in nucleotide-sugar biosynthesis; UDP-N-acetyl-alpha-D-glucosamine biosynthesis; N-acetyl-alpha-D-glucosamine 1-phosphate from alpha-D-glucosamine 6-phosphate (route II): step 2/2. The protein operates within nucleotide-sugar biosynthesis; UDP-N-acetyl-alpha-D-glucosamine biosynthesis; UDP-N-acetyl-alpha-D-glucosamine from N-acetyl-alpha-D-glucosamine 1-phosphate: step 1/1. Its pathway is bacterial outer membrane biogenesis; LPS lipid A biosynthesis. Functionally, catalyzes the last two sequential reactions in the de novo biosynthetic pathway for UDP-N-acetylglucosamine (UDP-GlcNAc). The C-terminal domain catalyzes the transfer of acetyl group from acetyl coenzyme A to glucosamine-1-phosphate (GlcN-1-P) to produce N-acetylglucosamine-1-phosphate (GlcNAc-1-P), which is converted into UDP-GlcNAc by the transfer of uridine 5-monophosphate (from uridine 5-triphosphate), a reaction catalyzed by the N-terminal domain. The polypeptide is Bifunctional protein GlmU (Photorhabdus laumondii subsp. laumondii (strain DSM 15139 / CIP 105565 / TT01) (Photorhabdus luminescens subsp. laumondii)).